The chain runs to 206 residues: Large ribosomal subunit protein uL4 (206 aa).

The segment at 46–78 is disordered; it reads GNRAQKDREQVKHTTKKPWRQKGTGRARAGMSS. The segment covering 58 to 70 has biased composition (basic residues); the sequence is HTTKKPWRQKGTG.

It belongs to the universal ribosomal protein uL4 family. In terms of assembly, part of the 50S ribosomal subunit.

One of the primary rRNA binding proteins, this protein initially binds near the 5'-end of the 23S rRNA. It is important during the early stages of 50S assembly. It makes multiple contacts with different domains of the 23S rRNA in the assembled 50S subunit and ribosome. Functionally, forms part of the polypeptide exit tunnel. The chain is Large ribosomal subunit protein uL4 from Burkholderia cenocepacia (strain ATCC BAA-245 / DSM 16553 / LMG 16656 / NCTC 13227 / J2315 / CF5610) (Burkholderia cepacia (strain J2315)).